The sequence spans 786 residues: Ribosome biogenesis protein BOP1 homolog (786 aa).

The span at 1–11 (MTKKLTIKRKV) shows a compositional bias: basic residues. Residues 1-161 (MTKKLTIKRK…DSDTSDEEDI (161 aa)) are disordered. 4 stretches are compositionally biased toward acidic residues: residues 28–37 (DNEEEEEEDL), 46–55 (EDSTDDEGID), 62–74 (SSED…DEEG), and 86–103 (SGDD…EDDA). Residues 104–113 (DAKKSSKNND) show a composition bias toward basic and acidic residues. The segment covering 151–160 (ADSDTSDEED) has biased composition (acidic residues). 7 WD repeats span residues 447-488 (GHTD…RTIE), 490-528 (EDVV…KLLV), 572-614 (THFK…SQIP), 617-655 (KSKG…LIKK), 658-697 (TNSK…KPYQ), 701-740 (LHRN…DLLQ), and 756-786 (REEF…RLFT).

It belongs to the WD repeat BOP1/ERB1 family.

It is found in the nucleus. It localises to the nucleolus. The protein localises to the nucleoplasm. In terms of biological role, required for maturation of ribosomal RNAs and formation of the large ribosomal subunit. The sequence is that of Ribosome biogenesis protein BOP1 homolog from Drosophila pseudoobscura pseudoobscura (Fruit fly).